We begin with the raw amino-acid sequence, 440 residues long: Chromosome partition protein MukF (440 aa).

The leucine-zipper stretch occupies residues 208–236; the sequence is LSETSGTLRELQDTLEAAGDKLQANLLRI.

It belongs to the MukF family. As to quaternary structure, interacts, and probably forms a ternary complex, with MukE and MukB via its C-terminal region. The complex formation is stimulated by calcium or magnesium. It is required for an interaction between MukE and MukB.

The protein resides in the cytoplasm. It localises to the nucleoid. In terms of biological role, involved in chromosome condensation, segregation and cell cycle progression. May participate in facilitating chromosome segregation by condensation DNA from both sides of a centrally located replisome during cell division. Not required for mini-F plasmid partitioning. Probably acts via its interaction with MukB and MukE. Overexpression results in anucleate cells. It has a calcium binding activity. The sequence is that of Chromosome partition protein MukF from Salmonella arizonae (strain ATCC BAA-731 / CDC346-86 / RSK2980).